A 493-amino-acid polypeptide reads, in one-letter code: NADH-quinone oxidoreductase subunit N 2 (493 aa).

14 helical membrane passes run 16–36 (IIPA…DFLI), 45–65 (FLLI…FRQQ), 87–107 (GFAI…AIVS), 119–139 (GEYY…ATGT), 141–161 (LITL…MVGF), 176–196 (LLLG…MYGI), 219–239 (VFLA…AVPF), 258–278 (LSVA…LGPL), 285–305 (WEPL…LAAI), 313–333 (LLAY…VAGN), 340–360 (IAVY…VIIA), 385–405 (AFLM…AGFL), 421–441 (GLAI…FKIV), and 464–484 (CALA…EPFL).

Belongs to the complex I subunit 2 family. As to quaternary structure, NDH-1 is composed of 14 different subunits. Subunits NuoA, H, J, K, L, M, N constitute the membrane sector of the complex.

Its subcellular location is the cell inner membrane. It carries out the reaction a quinone + NADH + 5 H(+)(in) = a quinol + NAD(+) + 4 H(+)(out). Functionally, NDH-1 shuttles electrons from NADH, via FMN and iron-sulfur (Fe-S) centers, to quinones in the respiratory chain. The immediate electron acceptor for the enzyme in this species is believed to be ubiquinone. Couples the redox reaction to proton translocation (for every two electrons transferred, four hydrogen ions are translocated across the cytoplasmic membrane), and thus conserves the redox energy in a proton gradient. In Solibacter usitatus (strain Ellin6076), this protein is NADH-quinone oxidoreductase subunit N 2.